The primary structure comprises 377 residues: Phospho-N-acetylmuramoyl-pentapeptide-transferase (377 aa).

The next 11 helical transmembrane spans lie at 9–29 (YITLRAVLACATALLIGLVAG), 62–82 (MGGALILIAIAISTLLWADWI), 85–105 (FVWVVLLVTFGFGWIGWMDDY), 122–142 (FFWQATIGLVAAVYLAFAVSA), 155–175 (WVGSGFTMPLPTRADLIVPFF), 178–198 (VSYPLGVLGFVALTWAVIVGT), 210–230 (GLAIMPTVMVGSALGIFAYVV), 247–267 (AAELMVLCAAIGGAGLAFLWF), 274–294 (VFMGDVGALALGGALGTIAVI), 299–319 (IVLFIMGGVFVVETLSVMVQV), and 354–374 (QVVVRFWIITMMLVLVGLSTL).

The protein belongs to the glycosyltransferase 4 family. MraY subfamily. Mg(2+) serves as cofactor.

The protein localises to the cell inner membrane. It catalyses the reaction UDP-N-acetyl-alpha-D-muramoyl-L-alanyl-gamma-D-glutamyl-meso-2,6-diaminopimeloyl-D-alanyl-D-alanine + di-trans,octa-cis-undecaprenyl phosphate = di-trans,octa-cis-undecaprenyl diphospho-N-acetyl-alpha-D-muramoyl-L-alanyl-D-glutamyl-meso-2,6-diaminopimeloyl-D-alanyl-D-alanine + UMP. It participates in cell wall biogenesis; peptidoglycan biosynthesis. Its function is as follows. Catalyzes the initial step of the lipid cycle reactions in the biosynthesis of the cell wall peptidoglycan: transfers peptidoglycan precursor phospho-MurNAc-pentapeptide from UDP-MurNAc-pentapeptide onto the lipid carrier undecaprenyl phosphate, yielding undecaprenyl-pyrophosphoryl-MurNAc-pentapeptide, known as lipid I. The polypeptide is Phospho-N-acetylmuramoyl-pentapeptide-transferase (Bordetella parapertussis (strain 12822 / ATCC BAA-587 / NCTC 13253)).